A 455-amino-acid polypeptide reads, in one-letter code: Exodeoxyribonuclease 7 large subunit (455 aa).

This sequence belongs to the XseA family. In terms of assembly, heterooligomer composed of large and small subunits.

Its subcellular location is the cytoplasm. It carries out the reaction Exonucleolytic cleavage in either 5'- to 3'- or 3'- to 5'-direction to yield nucleoside 5'-phosphates.. Bidirectionally degrades single-stranded DNA into large acid-insoluble oligonucleotides, which are then degraded further into small acid-soluble oligonucleotides. In Lactobacillus acidophilus (strain ATCC 700396 / NCK56 / N2 / NCFM), this protein is Exodeoxyribonuclease 7 large subunit.